The sequence spans 243 residues: Pyridoxine 5'-phosphate synthase (243 aa).

N9 contacts 3-amino-2-oxopropyl phosphate. 11–12 (DH) provides a ligand contact to 1-deoxy-D-xylulose 5-phosphate. R20 is a 3-amino-2-oxopropyl phosphate binding site. The active-site Proton acceptor is H45. 1-deoxy-D-xylulose 5-phosphate-binding residues include R47 and H52. Catalysis depends on E72, which acts as the Proton acceptor. Residue T102 coordinates 1-deoxy-D-xylulose 5-phosphate. H193 functions as the Proton donor in the catalytic mechanism. 3-amino-2-oxopropyl phosphate-binding positions include G194 and 215-216 (GH).

Belongs to the PNP synthase family. As to quaternary structure, homooctamer; tetramer of dimers.

The protein localises to the cytoplasm. The enzyme catalyses 3-amino-2-oxopropyl phosphate + 1-deoxy-D-xylulose 5-phosphate = pyridoxine 5'-phosphate + phosphate + 2 H2O + H(+). Its pathway is cofactor biosynthesis; pyridoxine 5'-phosphate biosynthesis; pyridoxine 5'-phosphate from D-erythrose 4-phosphate: step 5/5. In terms of biological role, catalyzes the complicated ring closure reaction between the two acyclic compounds 1-deoxy-D-xylulose-5-phosphate (DXP) and 3-amino-2-oxopropyl phosphate (1-amino-acetone-3-phosphate or AAP) to form pyridoxine 5'-phosphate (PNP) and inorganic phosphate. This is Pyridoxine 5'-phosphate synthase from Photorhabdus laumondii subsp. laumondii (strain DSM 15139 / CIP 105565 / TT01) (Photorhabdus luminescens subsp. laumondii).